The chain runs to 426 residues: Dihydroorotase (426 aa).

Zn(2+) is bound by residues histidine 62 and histidine 64. Substrate-binding positions include 64-66 (HLR) and asparagine 96. Zn(2+) is bound by residues aspartate 154, histidine 181, and histidine 234. Asparagine 280 serves as a coordination point for substrate. Residue aspartate 307 coordinates Zn(2+). Residue aspartate 307 is part of the active site. Substrate-binding positions include histidine 311 and 325-326 (FG).

It belongs to the metallo-dependent hydrolases superfamily. DHOase family. Class I DHOase subfamily. Requires Zn(2+) as cofactor.

The catalysed reaction is (S)-dihydroorotate + H2O = N-carbamoyl-L-aspartate + H(+). Its pathway is pyrimidine metabolism; UMP biosynthesis via de novo pathway; (S)-dihydroorotate from bicarbonate: step 3/3. Functionally, catalyzes the reversible cyclization of carbamoyl aspartate to dihydroorotate. The polypeptide is Dihydroorotase (Desulforapulum autotrophicum (strain ATCC 43914 / DSM 3382 / VKM B-1955 / HRM2) (Desulfobacterium autotrophicum)).